The chain runs to 241 residues: Carboxy-S-adenosyl-L-methionine synthase (241 aa).

S-adenosyl-L-methionine contacts are provided by residues Tyr38, 63–65 (GCS), 88–89 (DN), 116–117 (DI), Asn131, and Arg198.

Belongs to the class I-like SAM-binding methyltransferase superfamily. Cx-SAM synthase family. Homodimer.

The enzyme catalyses prephenate + S-adenosyl-L-methionine = carboxy-S-adenosyl-L-methionine + 3-phenylpyruvate + H2O. In terms of biological role, catalyzes the conversion of S-adenosyl-L-methionine (SAM) to carboxy-S-adenosyl-L-methionine (Cx-SAM). This chain is Carboxy-S-adenosyl-L-methionine synthase, found in Actinobacillus pleuropneumoniae serotype 7 (strain AP76).